The following is a 511-amino-acid chain: Bifunctional purine biosynthesis protein PurH (511 aa).

Residues Met-1–Ser-146 enclose the MGS-like domain.

Belongs to the PurH family.

It carries out the reaction (6R)-10-formyltetrahydrofolate + 5-amino-1-(5-phospho-beta-D-ribosyl)imidazole-4-carboxamide = 5-formamido-1-(5-phospho-D-ribosyl)imidazole-4-carboxamide + (6S)-5,6,7,8-tetrahydrofolate. The enzyme catalyses IMP + H2O = 5-formamido-1-(5-phospho-D-ribosyl)imidazole-4-carboxamide. It participates in purine metabolism; IMP biosynthesis via de novo pathway; 5-formamido-1-(5-phospho-D-ribosyl)imidazole-4-carboxamide from 5-amino-1-(5-phospho-D-ribosyl)imidazole-4-carboxamide (10-formyl THF route): step 1/1. Its pathway is purine metabolism; IMP biosynthesis via de novo pathway; IMP from 5-formamido-1-(5-phospho-D-ribosyl)imidazole-4-carboxamide: step 1/1. In Microcystis aeruginosa (strain NIES-843 / IAM M-2473), this protein is Bifunctional purine biosynthesis protein PurH.